Reading from the N-terminus, the 158-residue chain is Snaclec crotocetin-1 (158 aa).

An N-terminal signal peptide occupies residues 1-23 (MGRFIFVSFGLLVVFLSLSGTGA). Disulfide bonds link cysteine 27–cysteine 38, cysteine 55–cysteine 152, and cysteine 127–cysteine 144. Residues 34 to 153 (YDQYCYRVIK…CEEKNLFVCK (120 aa)) form the C-type lectin domain.

This sequence belongs to the snaclec family. In terms of assembly, heterodimer; disulfide-linked. Expressed by the venom gland.

Its subcellular location is the secreted. Interferes with one step of hemostasis (modulation of platelet aggregation, or coagulation cascade, for example). This chain is Snaclec crotocetin-1, found in Crotalus durissus terrificus (South American rattlesnake).